The primary structure comprises 252 residues: Membrane protein insertase YidC (252 aa).

The N-terminal stretch at 1–19 is a signal peptide; the sequence is MKKVLWIIIIILMVGALAG. Residue Cys20 is the site of N-palmitoyl cysteine attachment. Residue Cys20 is the site of S-diacylglycerol cysteine attachment. The next 6 membrane-spanning stretches (helical) occupy residues 34 to 54, 58 to 78, 131 to 151, 162 to 182, 201 to 221, and 223 to 243; these read IWNH…ADLL, FGLS…PLMI, MAGC…YFAI, FLWF…VAGI, VIIY…PSAL, and LYWV…VVRF.

Belongs to the OXA1/ALB3/YidC family. Type 2 subfamily.

Its subcellular location is the cell membrane. Its function is as follows. Required for the insertion and/or proper folding and/or complex formation of integral membrane proteins into the membrane. Involved in integration of membrane proteins that insert both dependently and independently of the Sec translocase complex, as well as at least some lipoproteins. The protein is Membrane protein insertase YidC of Alkalihalophilus pseudofirmus (strain ATCC BAA-2126 / JCM 17055 / OF4) (Bacillus pseudofirmus).